A 223-amino-acid polypeptide reads, in one-letter code: Probable transaldolase (223 aa).

Residue K86 is the Schiff-base intermediate with substrate of the active site.

This sequence belongs to the transaldolase family. Type 3B subfamily.

It localises to the cytoplasm. The catalysed reaction is D-sedoheptulose 7-phosphate + D-glyceraldehyde 3-phosphate = D-erythrose 4-phosphate + beta-D-fructose 6-phosphate. It participates in carbohydrate degradation; pentose phosphate pathway; D-glyceraldehyde 3-phosphate and beta-D-fructose 6-phosphate from D-ribose 5-phosphate and D-xylulose 5-phosphate (non-oxidative stage): step 2/3. Transaldolase is important for the balance of metabolites in the pentose-phosphate pathway. The protein is Probable transaldolase (tal) of Thermoplasma volcanium (strain ATCC 51530 / DSM 4299 / JCM 9571 / NBRC 15438 / GSS1).